The primary structure comprises 260 residues: Small ribosomal subunit protein bS6 (260 aa).

This sequence belongs to the bacterial ribosomal protein bS6 family.

Functionally, binds together with bS18 to 16S ribosomal RNA. This Wolbachia sp. subsp. Brugia malayi (strain TRS) protein is Small ribosomal subunit protein bS6.